Here is a 482-residue protein sequence, read N- to C-terminus: Sugar transporter ERD6-like 16 (482 aa).

Transmembrane regions (helical) follow at residues 42 to 62 (LMVL…GSCV), 80 to 100 (LAEF…GAVM), 117 to 137 (SACF…ALLL), 142 to 162 (FFTG…IAEI), 173 to 193 (TLNQ…GSLI), 197 to 217 (TLAL…CFIP), 280 to 300 (VIIG…GIGF), 316 to 336 (LGTI…TILI), 344 to 364 (LIMI…TSFL), 382 to 402 (GVLI…WVIM), 413 to 433 (IAGS…SYTF), and 443 to 463 (GTFY…AKMV).

It belongs to the major facilitator superfamily. Sugar transporter (TC 2.A.1.1) family.

The protein localises to the membrane. Functionally, sugar transporter. The polypeptide is Sugar transporter ERD6-like 16 (Arabidopsis thaliana (Mouse-ear cress)).